The sequence spans 423 residues: Proline racemase A (423 aa).

Positions 1–31 (MRKSVCPKQKFFFSAFPFFFFFCVFPLISRT) are cleaved as a signal peptide. C160 (proton acceptor) is an active-site residue. 161-162 (GH) lines the substrate pocket. N-linked (GlcNAc...) asparagine glycans are attached at residues N213, N266, and N282. D326 lines the substrate pocket. The active-site Proton donor is the C330. A substrate-binding site is contributed by 331–332 (GT).

It belongs to the proline racemase family. As to quaternary structure, homodimer.

Its subcellular location is the secreted. The protein localises to the membrane. It localises to the cytoplasm. It catalyses the reaction L-proline = D-proline. Inhibited by maleic acid, iodoacetamide, iodoacetate and, most particularly, pyrrole-2-carboxylic acid. Catalyzes the interconversion of L- and D-proline. Secreted isoform 1 contributes to parasite immune evasion by acting as a B-cell mitogen. Probably involved in parasite differentiation and infectivity. The polypeptide is Proline racemase A (PA45-A) (Trypanosoma cruzi (strain CL Brener)).